Consider the following 486-residue polypeptide: Matrilin-3 (486 aa).

An N-terminal signal peptide occupies residues 1–28 (MPRPAPARRLPGLLLLLWPLLLLPSAAP). Residues 32 to 75 (ARPGFRRLETRGPGGSPGRRPSPAAPDGAPASGTSEPGRARGAG) are disordered. The segment covering 49–64 (GRRPSPAAPDGAPASG) has biased composition (low complexity). One can recognise a VWFA domain in the interval 83-258 (DLVFIIDSSR…GVIEKLSSRF (176 aa)). R198 is modified (omega-N-methylarginine). 4 consecutive EGF-like domains span residues 264–305 (ALDP…KTCS), 306–347 (ALDR…KTCS), 348–389 (AQDK…KTCS), and 390–431 (VRDK…KTCS). 12 disulfide bridges follow: C268/C279, C275/C289, C291/C304, C310/C321, C317/C331, C333/C346, C352/C363, C359/C373, C375/C388, C394/C405, C401/C415, and C417/C430. A Phosphoserine; by FAM20C modification is found at S441. At T442 the chain carries Phosphothreonine; by FAM20C. Positions 456 to 480 (DKVSSYLQRLNTKLDDILEKLKINE) form a coiled coil.

In terms of assembly, can form homooligomers (monomers, dimers, trimers and tetramers) and heterooligomers with matrilin-1. Interacts with COMP. Component of a complex containing at least CRELD2, MANF, MATN3 and PDIA4. Expressed only in cartilaginous tissues, such as vertebrae, ribs and shoulders.

The protein localises to the secreted. Major component of the extracellular matrix of cartilage and may play a role in the formation of extracellular filamentous networks. This Homo sapiens (Human) protein is Matrilin-3 (MATN3).